Reading from the N-terminus, the 71-residue chain is UPF0435 protein RBAM_008100 (71 aa).

The protein belongs to the UPF0435 family.

The polypeptide is UPF0435 protein RBAM_008100 (Bacillus velezensis (strain DSM 23117 / BGSC 10A6 / LMG 26770 / FZB42) (Bacillus amyloliquefaciens subsp. plantarum)).